The sequence spans 293 residues: Probable metal transport system membrane protein TC_0698 (293 aa).

Helical transmembrane passes span 18–38 (SLLA…YIVV), 41–61 (IVSI…IALW), 68–88 (LPIS…ICIG), 101–121 (IISM…SKLP), 142–162 (DLYF…ICHT), 186–206 (FLLL…MGVI), and 242–262 (FLGI…IAIL).

It belongs to the ABC-3 integral membrane protein family.

Its subcellular location is the cell inner membrane. In terms of biological role, part of an ATP-driven transport system TC_0696/TC_0697/TC_0698 for a metal. The chain is Probable metal transport system membrane protein TC_0698 from Chlamydia muridarum (strain MoPn / Nigg).